Here is a 220-residue protein sequence, read N- to C-terminus: Coat protein TP4 (220 aa).

The protein localises to the virion. The chain is Coat protein TP4 from Thermoproteus tenax (TTV1).